Reading from the N-terminus, the 404-residue chain is Cysteine desulfurase IscS (404 aa).

Residues 75-76 (AT), asparagine 155, glutamine 183, and 203-205 (SAH) contribute to the pyridoxal 5'-phosphate site. Lysine 206 is subject to N6-(pyridoxal phosphate)lysine. Residue threonine 243 coordinates pyridoxal 5'-phosphate. Catalysis depends on cysteine 328, which acts as the Cysteine persulfide intermediate. Cysteine 328 serves as a coordination point for [2Fe-2S] cluster.

Belongs to the class-V pyridoxal-phosphate-dependent aminotransferase family. NifS/IscS subfamily. Homodimer. Forms a heterotetramer with IscU, interacts with other sulfur acceptors. Pyridoxal 5'-phosphate serves as cofactor.

The protein resides in the cytoplasm. It catalyses the reaction (sulfur carrier)-H + L-cysteine = (sulfur carrier)-SH + L-alanine. It participates in cofactor biosynthesis; iron-sulfur cluster biosynthesis. In terms of biological role, master enzyme that delivers sulfur to a number of partners involved in Fe-S cluster assembly, tRNA modification or cofactor biosynthesis. Catalyzes the removal of elemental sulfur atoms from cysteine to produce alanine. Functions as a sulfur delivery protein for Fe-S cluster synthesis onto IscU, an Fe-S scaffold assembly protein, as well as other S acceptor proteins. This is Cysteine desulfurase IscS from Ruthia magnifica subsp. Calyptogena magnifica.